We begin with the raw amino-acid sequence, 77 residues long: Small ribosomal subunit protein uS17 (77 aa).

Belongs to the universal ribosomal protein uS17 family. Part of the 30S ribosomal subunit.

One of the primary rRNA binding proteins, it binds specifically to the 5'-end of 16S ribosomal RNA. The chain is Small ribosomal subunit protein uS17 from Rickettsia rickettsii (strain Sheila Smith).